We begin with the raw amino-acid sequence, 280 residues long: MTTHLQAKATLHNGVEMPWFGLGVFQVEEGSELVNAVKTAIVHGYRSIDTAAIYGNEAGVGEGIREGIEEAGISREDLFITSKVWNADLGYEETLAAFETSLSKLGLDYLDLYLIHWPVEGKYKEAWRALETLYKEGRIKAIGVSNFQIHHLEDLMTAAEIKPMINQVEFHPRLTQKELIRYCQNQGIQMEAWSPLMQGQLLDHPVLADIAQTYNKSVAQIILRWDLQHGIITIPKSTKEHRIKENASVFDFELTQDDMNRIDALNENLRVGPDPDNFDF.

The Proton donor role is filled by Tyr54. His116 serves as a coordination point for substrate. 194–246 (SPLMQGQLLDHPVLADIAQTYNKSVAQIILRWDLQHGIITIPKSTKEHRIKEN) is a binding site for NADP(+).

It belongs to the aldo/keto reductase family.

This is an uncharacterized protein from Bacillus subtilis (strain 168).